The chain runs to 334 residues: Ornithine carbamoyltransferase (334 aa).

Carbamoyl phosphate contacts are provided by residues 57-60, Gln-84, Arg-108, and 135-138; these read STRT and HPTQ. L-ornithine contacts are provided by residues Asn-169, Asp-233, and 237-238; that span reads SM. Carbamoyl phosphate-binding positions include 275–276 and Arg-320; that span reads CL.

Belongs to the aspartate/ornithine carbamoyltransferase superfamily. OTCase family.

The protein localises to the cytoplasm. The catalysed reaction is carbamoyl phosphate + L-ornithine = L-citrulline + phosphate + H(+). Its pathway is amino-acid biosynthesis; L-arginine biosynthesis; L-arginine from L-ornithine and carbamoyl phosphate: step 1/3. Functionally, reversibly catalyzes the transfer of the carbamoyl group from carbamoyl phosphate (CP) to the N(epsilon) atom of ornithine (ORN) to produce L-citrulline. In Vibrio campbellii (strain ATCC BAA-1116), this protein is Ornithine carbamoyltransferase.